We begin with the raw amino-acid sequence, 360 residues long: 3-isopropylmalate dehydrogenase (360 aa).

76 to 89 (GPKWDKIERDIRPE) lines the NAD(+) pocket. The substrate site is built by R96, R106, R134, and D224. Mg(2+)-binding residues include D224, D248, and D252. 282–294 (GSAPDIAGQGIAN) is a binding site for NAD(+).

This sequence belongs to the isocitrate and isopropylmalate dehydrogenases family. LeuB type 1 subfamily. In terms of assembly, homodimer. The cofactor is Mg(2+). Requires Mn(2+) as cofactor.

The protein localises to the cytoplasm. It carries out the reaction (2R,3S)-3-isopropylmalate + NAD(+) = 4-methyl-2-oxopentanoate + CO2 + NADH. The protein operates within amino-acid biosynthesis; L-leucine biosynthesis; L-leucine from 3-methyl-2-oxobutanoate: step 3/4. Catalyzes the oxidation of 3-carboxy-2-hydroxy-4-methylpentanoate (3-isopropylmalate) to 3-carboxy-4-methyl-2-oxopentanoate. The product decarboxylates to 4-methyl-2 oxopentanoate. This is 3-isopropylmalate dehydrogenase from Pseudomonas fluorescens (strain ATCC BAA-477 / NRRL B-23932 / Pf-5).